Here is a 217-residue protein sequence, read N- to C-terminus: MAWFFAPEPVMVTADEALKGGRHPVLENPAPHTVLGTPVTGPWKEGQQRIWIGLGCFWGVEQMYWQMDGVEGTSVGYAGGFTPNPTYREVCSGRTGHTEIVEVVYDPSKISLEQLVARGLEAHDPTQGFRQGNDVGTQYRSAYYTENEEDAARVKAVVDAYGETLKQHGFGEITTEIGVISPSDYFLAEDYHQQYLDKNPDGYCPHHSTGIPCGVEA.

The active site involves Cys-56.

Belongs to the MsrA Met sulfoxide reductase family.

It carries out the reaction L-methionyl-[protein] + [thioredoxin]-disulfide + H2O = L-methionyl-(S)-S-oxide-[protein] + [thioredoxin]-dithiol. It catalyses the reaction [thioredoxin]-disulfide + L-methionine + H2O = L-methionine (S)-S-oxide + [thioredoxin]-dithiol. Functionally, has an important function as a repair enzyme for proteins that have been inactivated by oxidation. Catalyzes the reversible oxidation-reduction of methionine sulfoxide in proteins to methionine. The chain is Peptide methionine sulfoxide reductase MsrA from Corynebacterium glutamicum (strain ATCC 13032 / DSM 20300 / JCM 1318 / BCRC 11384 / CCUG 27702 / LMG 3730 / NBRC 12168 / NCIMB 10025 / NRRL B-2784 / 534).